The chain runs to 201 residues: Ubiquinone biosynthesis accessory factor UbiJ (201 aa).

The region spanning 15-112 is the SCP2 domain; sequence LNTFLYRSPA…QVVQNFVALA (98 aa).

Belongs to the UbiJ family.

The protein localises to the cytoplasm. It functions in the pathway cofactor biosynthesis; ubiquinone biosynthesis. Its function is as follows. Required for ubiquinone (coenzyme Q) biosynthesis under aerobic conditions. Binds hydrophobic ubiquinone biosynthetic intermediates via its SCP2 domain and is essential for the stability of the Ubi complex. May constitute a docking platform where Ubi enzymes assemble and access their SCP2-bound polyprenyl substrates. Required for intracellular proliferation in macrophages. This is Ubiquinone biosynthesis accessory factor UbiJ from Salmonella typhimurium (strain LT2 / SGSC1412 / ATCC 700720).